The following is a 585-amino-acid chain: Packaging protein UL32 (585 aa).

The tract at residues 1 to 25 (MDRVESEEPMDGFESPVFSENTSSN) is disordered. The Zn(2+) site is built by C107, C110, H187, C193, C408, C411, H484, and C491. Zinc finger stretches follow at residues 107–193 (CLVC…LHVC) and 408–491 (CMLC…DLLC).

It belongs to the herpesviridae UL32 protein family.

It is found in the host cytoplasm. Its subcellular location is the host nucleus. In terms of biological role, plays a role in efficient localization of neo-synthesized capsids to nuclear replication compartments, thereby controlling cleavage and packaging of virus genomic DNA. The chain is Packaging protein UL32 (26) from Varicella-zoster virus (strain Dumas) (HHV-3).